Here is a 418-residue protein sequence, read N- to C-terminus: Putative ion-transport protein YfeO (418 aa).

12 helical membrane-spanning segments follow: residues Leu-10–Val-30, Asp-54–Ile-74, Ala-99–Pro-119, Glu-120–Pro-140, Ile-149–Ile-169, Leu-186–Pro-206, Ile-223–Cys-243, Val-258–Val-278, Asp-300–Phe-320, Gly-322–His-342, Val-343–Val-363, and Leu-371–Met-391.

It belongs to the chloride channel (TC 2.A.49) family.

It is found in the cell membrane. In Shigella sonnei (strain Ss046), this protein is Putative ion-transport protein YfeO.